Consider the following 171-residue polypeptide: Large ribosomal subunit protein bL21 (171 aa).

Residues 144–171 (AAPAKAEAAPKKKAAPKKAAAKTEEGEA) are disordered. Residues 154–163 (KKKAAPKKAA) show a composition bias toward basic residues.

Belongs to the bacterial ribosomal protein bL21 family. In terms of assembly, part of the 50S ribosomal subunit. Contacts protein L20.

In terms of biological role, this protein binds to 23S rRNA in the presence of protein L20. The chain is Large ribosomal subunit protein bL21 from Caulobacter vibrioides (strain ATCC 19089 / CIP 103742 / CB 15) (Caulobacter crescentus).